The chain runs to 658 residues: Protein translocase subunit SecA 3 (658 aa).

Residues Gln111, 129–133 (GEGKT), and Asp536 each bind ATP.

Belongs to the SecA family. Monomer and homodimer. Part of the essential Sec protein translocation apparatus which comprises SecA, SecYEG and auxiliary proteins SecDF-YajC and YidC.

It localises to the cell inner membrane. Its subcellular location is the cytoplasm. It carries out the reaction ATP + H2O + cellular proteinSide 1 = ADP + phosphate + cellular proteinSide 2.. Its function is as follows. Part of the Sec protein translocase complex. Interacts with the SecYEG preprotein conducting channel. Has a central role in coupling the hydrolysis of ATP to the transfer of proteins into and across the cell membrane, serving both as a receptor for the preprotein-SecB complex and as an ATP-driven molecular motor driving the stepwise translocation of polypeptide chains across the membrane. The polypeptide is Protein translocase subunit SecA 3 (Magnetococcus marinus (strain ATCC BAA-1437 / JCM 17883 / MC-1)).